An 864-amino-acid polypeptide reads, in one-letter code: Protein PAT1 homolog 1 (864 aa).

Over residues 427-439 the composition is skewed to polar residues; the sequence is PPNSRPNGPQFSG. 3 disordered regions span residues 427–460, 518–539, and 551–602; these read PPNS…SGMP, WTAH…SRKD, and EMQK…STHN. Positions 551 to 580 are enriched in basic and acidic residues; the sequence is EMQKERLRDREKERQRERQERIDRGEERKP.

It belongs to the PAT1 family.

It localises to the cytoplasm. The protein resides in the P-body. Its function is as follows. RNA-binding protein involved in deadenylation-dependent decapping of mRNAs, leading to the degradation of mRNAs. Acts as a scaffold protein that connects deadenylation and decapping machinery. Required for the recruitment of P-body components such as cgh-1 in somatic blastomeres. May play a role in recruiting the decapping enzyme dcap-1 to cytoplasmic puncta in the cell body of the posterior touch receptor neuron, PLM. This Caenorhabditis briggsae protein is Protein PAT1 homolog 1 (patr-1).